A 756-amino-acid chain; its full sequence is Protein SDA1 homolog (756 aa).

Residues 227-282 (EEEEDEAVKEKRAKDNFRKKSLAHRVGKKTKGRITRLAKSKVDLKKAKQEEDNKLQ) adopt a coiled-coil conformation. 2 stretches are compositionally biased toward acidic residues: residues 494–514 (AGEE…EGWE) and 521–596 (ADDD…EEEE). Disordered regions lie at residues 494–615 (AGEE…VLRT) and 638–756 (AREN…RGRH). Basic and acidic residues predominate over residues 605-615 (QQKEKVEVLRT). Residues 647 to 656 (DMDQDDDENG) are compositionally biased toward acidic residues. The span at 677 to 691 (EEKLERIARAKEGRD) shows a compositional bias: basic and acidic residues. The segment covering 725-735 (KTKKVRGKSLK) has biased composition (basic residues). The segment covering 736-749 (SFRDKQIGQREHSA) has biased composition (basic and acidic residues).

It belongs to the SDA1 family.

It localises to the nucleus. The protein localises to the nucleolus. In terms of biological role, required for 60S pre-ribosomal subunits export to the cytoplasm. The chain is Protein SDA1 homolog (sdad1) from Dictyostelium discoideum (Social amoeba).